A 235-amino-acid chain; its full sequence is Leucyl/phenylalanyl-tRNA--protein transferase (235 aa).

It belongs to the L/F-transferase family.

The protein resides in the cytoplasm. The catalysed reaction is N-terminal L-lysyl-[protein] + L-leucyl-tRNA(Leu) = N-terminal L-leucyl-L-lysyl-[protein] + tRNA(Leu) + H(+). It carries out the reaction N-terminal L-arginyl-[protein] + L-leucyl-tRNA(Leu) = N-terminal L-leucyl-L-arginyl-[protein] + tRNA(Leu) + H(+). It catalyses the reaction L-phenylalanyl-tRNA(Phe) + an N-terminal L-alpha-aminoacyl-[protein] = an N-terminal L-phenylalanyl-L-alpha-aminoacyl-[protein] + tRNA(Phe). Functions in the N-end rule pathway of protein degradation where it conjugates Leu, Phe and, less efficiently, Met from aminoacyl-tRNAs to the N-termini of proteins containing an N-terminal arginine or lysine. In Azoarcus sp. (strain BH72), this protein is Leucyl/phenylalanyl-tRNA--protein transferase.